A 305-amino-acid chain; its full sequence is Probable cell division protein WhiA (305 aa).

The H-T-H motif DNA-binding region spans 272–305 (SIQQLADSLTVPITKSGVNHRLRKINKIADELTD).

This sequence belongs to the WhiA family.

Functionally, involved in cell division and chromosome segregation. The chain is Probable cell division protein WhiA from Streptococcus suis (strain 98HAH33).